The following is a 182-amino-acid chain: MPIKPLVILPDPILREISKPVEHIDSTIQQLADDMLETMYNAGGIGLAAIQVGIPLRMLVVDVSIFTSIFEPDAPQDPIIVINPEILWLSDERNICMEGCLSIPGYSAEVERPKRLCIRYRNREGEQKEIEADNILATCLQHEIDHLNGCLFIDHLSKVKRNMVIRKFEKRAKENNLEKEIL.

Positions 100 and 142 each coordinate Fe cation. The active site involves E143. H146 is a Fe cation binding site.

This sequence belongs to the polypeptide deformylase family. Fe(2+) is required as a cofactor.

The catalysed reaction is N-terminal N-formyl-L-methionyl-[peptide] + H2O = N-terminal L-methionyl-[peptide] + formate. In terms of biological role, removes the formyl group from the N-terminal Met of newly synthesized proteins. Requires at least a dipeptide for an efficient rate of reaction. N-terminal L-methionine is a prerequisite for activity but the enzyme has broad specificity at other positions. The polypeptide is Peptide deformylase (Bartonella bacilliformis (strain ATCC 35685 / KC583 / Herrer 020/F12,63)).